The sequence spans 302 residues: Acetaldehyde dehydrogenase (302 aa).

12 to 15 (SGNI) lines the NAD(+) pocket. The Acyl-thioester intermediate role is filled by Cys127. NAD(+)-binding positions include 158–166 (SAGPGTRQN) and Asn276.

This sequence belongs to the acetaldehyde dehydrogenase family.

It catalyses the reaction acetaldehyde + NAD(+) + CoA = acetyl-CoA + NADH + H(+). In Geobacillus genomosp. 3, this protein is Acetaldehyde dehydrogenase (nahO).